A 131-amino-acid chain; its full sequence is UPF0102 protein Ent638_3585 (131 aa).

Residues 1–20 (MAQIPAGADRPGKLSRKQTG) form a disordered region.

This sequence belongs to the UPF0102 family.

The polypeptide is UPF0102 protein Ent638_3585 (Enterobacter sp. (strain 638)).